A 406-amino-acid chain; its full sequence is 2,3-diketo-5-methylthiopentyl-1-phosphate enolase (406 aa).

K94 (proton acceptor) is an active-site residue. Substrate contacts are provided by residues K143, K169–E172, H260, G332, and G354–G355. The Mg(2+) site is built by K169, D171, and E172. The residue at position 169 (K169) is an N6-carboxylysine.

It belongs to the RuBisCO large chain family. Type IV subfamily. In terms of assembly, homodimer. Mg(2+) serves as cofactor.

The catalysed reaction is 5-methylsulfanyl-2,3-dioxopentyl phosphate = 2-hydroxy-5-methylsulfanyl-3-oxopent-1-enyl phosphate. Its pathway is amino-acid biosynthesis; L-methionine biosynthesis via salvage pathway; L-methionine from S-methyl-5-thio-alpha-D-ribose 1-phosphate: step 3/6. In terms of biological role, catalyzes the enolization of 2,3-diketo-5-methylthiopentyl-1-phosphate (DK-MTP-1-P) into 2-hydroxy-3-keto-5-methylthiopentenyl-1-phosphate (HK-MTPenyl-1-P). This chain is 2,3-diketo-5-methylthiopentyl-1-phosphate enolase, found in Bacillus pumilus (strain SAFR-032).